The sequence spans 1279 residues: Sterol regulatory element-binding protein cleavage-activating protein (1279 aa).

Topologically, residues 1-18 are cytoplasmic; that stretch reads MTLTERLREKISRAFYNH. Residues 19–39 traverse the membrane as a helical segment; sequence GLLCASYPIPIILFTGFCILA. The Lumenal portion of the chain corresponds to 40 to 279; the sequence is CCYPLLKLPL…SLVHVHFKEE (240 aa). Residues 46-284 form a loop-1 region; that stretch reads KLPLPGTGPV…HFKEEIGVAE (239 aa). Positions 60–80 are disordered; sequence PVKDYSPPPVDSDRKQGEPTE. A glycan (N-linked (GlcNAc...) asparagine) is linked at asparagine 263. Residues 280 to 300 form a helical membrane-spanning segment; the sequence is IGVAELIPLVTTYIILFAYIY. An SSD domain is found at 284-442; that stretch reads ELIPLVTTYI…MLFFTTVLSI (159 aa). The Cytoplasmic segment spans residues 301–312; sequence FSTRKIDMVKSK. A helical transmembrane segment spans residues 313-333; that stretch reads WGLALAAVVTVLSSLLMSVGL. At 334–344 the chain is on the lumenal side; sequence CTLFGLTPTLN. A helical transmembrane segment spans residues 345-365; it reads GGEIFPYLVVVIGLENVLVLT. Over 366–401 the chain is Cytoplasmic; sequence KSVVSTPVDLEVKLRIAQGLSSESWSIMKNMATELG. Residues 402–422 form a helical membrane-spanning segment; the sequence is IILIGYFTLVPAIQEFCLFAV. Residue valine 423 is a topological domain, lumenal. The chain crosses the membrane as a helical span at residues 424–444; the sequence is GLVSDFFLQMLFFTTVLSIDI. Residues 445 to 518 are Cytoplasmic-facing; sequence RRMELADLNK…FLARTRLAQR (74 aa). An ER export signal motif is present at residues 447-452; sequence MELADL. Glycyl lysine isopeptide (Lys-Gly) (interchain with G-Cter in ubiquitin) cross-links involve residues lysine 454 and lysine 466. A helical transmembrane segment spans residues 519 to 539; sequence LIMAGTVVWIGILVYTDPAGL. A loop-7 region spans residues 535-710; sequence DPAGLRNYLA…QAHGDVTLYK (176 aa). At 540 to 709 the chain is on the lumenal side; that stretch reads RNYLAAQVTE…VQAHGDVTLY (170 aa). The disordered stretch occupies residues 579–615; it reads IFPPDAPKLPENQTSPGESPERGGPAEVVHDSPVPEV. Asparagine 590 and asparagine 641 each carry an N-linked (GlcNAc...) asparagine glycan. Residues 668–696 are disordered; it reads EGRHPQDGRSAWPPPGPIPAGHWEAGPKG. The chain crosses the membrane as a helical span at residues 710–730; sequence KVAALGLATGIVLVLLLLCLY. The Cytoplasmic portion of the chain corresponds to 731 to 1279; the sequence is RVLCPRNYGQ…YVPSVLEKLD (549 aa). Residues 731–1279 are interaction with SREBF2; that stretch reads RVLCPRNYGQ…YVPSVLEKLD (549 aa). One copy of the WD 1 repeat lies at 771–811; it reads VLRGHLMDIECLASDGMLLVSCCLAGHVCVWDAQTGDCLTR. The interval 811–904 is disordered; it reads RIPRPGRQRR…PRHRAVCGRS (94 aa). Serine 822, serine 838, and serine 851 each carry phosphoserine. Positions 877–891 are enriched in polar residues; it reads IDTNFSAQPRSSQPT. 2 positions are modified to phosphoserine: serine 907 and serine 937. The tract at residues 931 to 962 is disordered; the sequence is PALRPPSPGPVLSQAPEDEGGSPEKGSPSLAW. 2 WD repeats span residues 952 to 1002 and 1005 to 1042; these read SPEK…LCCS and EVSSGITALVFLDKRIVAARLNGSLDFFSLETHTALSP. The residue at position 1051 (arginine 1051) is an Omega-N-methylarginine. 4 WD repeats span residues 1077 to 1114, 1117 to 1155, 1158 to 1195, and 1197 to 1235; these read AHQKPITALKAAAGRLVTGSQDHTLRVFRLEDSCCLFT, GHSGAITTVYIDQTMVLASGGQDGAICLWDVLTGSRVSH, AHRGDVTSLTCTTSCVISSGLDDLISIWDRSTGIKFYS, and QQDLGCGASLGVISDNLLVTGGQGCVSFWDLNYGDLLQT.

It belongs to the WD repeat SCAP family. Membrane region forms a homotetramer. Component of the SCAP-SREBP complex (composed of SCAP and SREBF1/SREBP1 or SREBF2/SREBP2); interacts with SREBF1/SREBP1 or SREBF2/SREBP2 through its C-terminal cytoplasmic domain. Forms a ternary complex with INSIG1 or INSIG2 through its transmembrane domains at high sterol concentrations. Interacts with PAQR3; the interaction anchors the SCAP-SREBP complex to the Golgi apparatus in low cholesterol conditions. Interacts with the SEC23-SEC24 complex in a SAR1-GTP-dependent manner through an ER export signal in its third cytoplasmic loop. Interacts with RNF139; the interaction inhibits the interaction of SCAP with SEC24B and hampering the ER to Golgi transport of the SCAP-SREBP complex. Interacts with SPRING1. In terms of processing, ubiquitinated at Lys-454 and Lys-466. RNF145 triggers ubiquitination of SCAP, likely inhibiting SCAP-SREBP complex transport to the Golgi apparatus and the subsequent processing/maturation of SREBF2/SREBP2.

It localises to the endoplasmic reticulum membrane. The protein localises to the golgi apparatus membrane. The protein resides in the cytoplasmic vesicle. It is found in the COPII-coated vesicle membrane. Its function is as follows. Escort protein required for cholesterol as well as lipid homeostasis. Regulates export of the SCAP-SREBP complex from the endoplasmic reticulum to the Golgi upon low cholesterol, thereby regulating the processing of sterol regulatory element-binding proteins (SREBPs) SREBF1/SREBP1 and SREBF2/SREBP2. At high sterol concentrations, formation of a ternary complex with INSIG (INSIG1 or INSIG2) leads to mask the ER export signal in SCAP, promoting retention of the complex in the endoplasmic reticulum. Low sterol concentrations trigger release of INSIG, a conformational change in the SSD domain of SCAP, unmasking of the ER export signal, promoting recruitment into COPII-coated vesicles and transport of the SCAP-SREBP to the Golgi: in the Golgi, SREBPs are then processed, releasing the transcription factor fragment of SREBPs from the membrane, its import into the nucleus and up-regulation of LDLR, INSIG1 and the mevalonate pathway. Binds cholesterol via its SSD domain. The sequence is that of Sterol regulatory element-binding protein cleavage-activating protein from Homo sapiens (Human).